The primary structure comprises 122 residues: Large ribosomal subunit protein uL14 (122 aa).

This sequence belongs to the universal ribosomal protein uL14 family. Part of the 50S ribosomal subunit. Forms a cluster with proteins L3 and L19. In the 70S ribosome, L14 and L19 interact and together make contacts with the 16S rRNA in bridges B5 and B8.

Functionally, binds to 23S rRNA. Forms part of two intersubunit bridges in the 70S ribosome. In Heliobacterium modesticaldum (strain ATCC 51547 / Ice1), this protein is Large ribosomal subunit protein uL14.